We begin with the raw amino-acid sequence, 449 residues long: Hyaluronidase (449 aa).

The signal sequence occupies residues 1–23 (MYHIWIKFLAAWIFLKRFNGVHV). 2 disulfide bridges follow: Cys47–Cys340 and Cys211–Cys227. Residues Asn67, Asn103, and Asn111 are each glycosylated (N-linked (GlcNAc...) asparagine). The active-site Proton donor is Glu135. N-linked (GlcNAc...) asparagine glycosylation occurs at Asn153. An N-linked (GlcNAc...) asparagine glycan is attached at Asn357. Intrachain disulfides connect Cys365/Cys376, Cys370/Cys427, and Cys429/Cys438. An N-linked (GlcNAc...) asparagine glycan is attached at Asn401. In terms of domain architecture, EGF-like spans 427–438 (CQCYQGWKGLYC).

Belongs to the glycosyl hydrolase 56 family. Monomer. As to expression, expressed by the venom gland.

Its subcellular location is the secreted. The catalysed reaction is Random hydrolysis of (1-&gt;4)-linkages between N-acetyl-beta-D-glucosamine and D-glucuronate residues in hyaluronate.. In terms of biological role, snake venom endo-hyaluronidase that degrades hyaluronan to smaller oligosaccharide fragments. In venom, it is not toxic by itself, but increases the diffusion of other venom proteins by degrading the extracellular matrix. In addition, it displays antiedematogenic activity. The chain is Hyaluronidase from Echis pyramidum leakeyi (Leakey's carpet viper).